A 396-amino-acid chain; its full sequence is THAP domain-containing protein 5 (396 aa).

The THAP-type zinc-finger motif lies at 2-85 (MPRYCAAICC…LKQTAVPTIF (84 aa)). The interval 86–113 (SLPEDNQGKDPSKKKSQKKNLEDEKEVC) is disordered. Positions 91 to 113 (NQGKDPSKKKSQKKNLEDEKEVC) are enriched in basic and acidic residues. The short motif at 322 to 325 (EHSY) is the HCFC1-binding motif (HBM) element. The stretch at 349–382 (LELKEQQTLGRLKSLEALVRQLKQENWLSEENVK) forms a coiled coil.

In terms of assembly, interacts with HTRA2; under apoptotic conditions. Interacts with ABRAXAS2. Post-translationally, cleaved by HTRA2 during apoptosis.

It is found in the nucleus. Its function is as follows. Has sequence-specific DNA-binding activity and can function as transcriptional repressor (in vitro). May be a regulator of cell cycle: THAP5 overexpression in human cell lines causes cell cycle arrest at G2/M phase. The protein is THAP domain-containing protein 5 (THAP5) of Macaca fascicularis (Crab-eating macaque).